We begin with the raw amino-acid sequence, 269 residues long: Eukaryotic translation initiation factor 3 subunit G-1 (269 aa).

One can recognise an RRM domain in the interval 188 to 266 (AAIRISNLSE…LILSVEWSKP (79 aa)).

It belongs to the eIF-3 subunit G family. As to quaternary structure, component of the eukaryotic translation initiation factor 3 (eIF-3) complex. The eIF-3 complex interacts with pix.

It localises to the cytoplasm. RNA-binding component of the eukaryotic translation initiation factor 3 (eIF-3) complex, which is involved in protein synthesis of a specialized repertoire of mRNAs and, together with other initiation factors, stimulates binding of mRNA and methionyl-tRNAi to the 40S ribosome. The eIF-3 complex specifically targets and initiates translation of a subset of mRNAs involved in cell proliferation. This subunit can bind 18S rRNA. The protein is Eukaryotic translation initiation factor 3 subunit G-1 of Drosophila grimshawi (Hawaiian fruit fly).